The sequence spans 323 residues: Tumor-associated calcium signal transducer 2 (323 aa).

The signal sequence occupies residues 1–26 (MARGPGLAPPPLRLPLLLLVLAAVTG). Over 27–274 (HTAAQDNCTC…PPKFSMKRLT (248 aa)) the chain is Extracellular. N-linked (GlcNAc...) asparagine glycosylation is present at N33. One can recognise a Thyroglobulin type-1 domain in the interval 70–145 (TSKCLLLKAR…TDKGDLSLRC (76 aa)). 3 disulfides stabilise this stretch: C73-C108, C119-C125, and C127-C145. N120 is a glycosylation site (N-linked (GlcNAc...) asparagine). N168 and N208 each carry an N-linked (GlcNAc...) asparagine glycan. A helical membrane pass occupies residues 275–297 (AGLIAVIVVVVVALVAGMAVLVI). Topologically, residues 298-323 (TNRRKSGKYKKVEIKELGELRKEPSL) are cytoplasmic.

Belongs to the EPCAM family. Post-translationally, the N-terminus is blocked. As to expression, placenta, pancreatic carcinoma cell lines.

It is found in the membrane. In terms of biological role, may function as a growth factor receptor. The polypeptide is Tumor-associated calcium signal transducer 2 (TACSTD2) (Homo sapiens (Human)).